The sequence spans 385 residues: Mannitol-1-phosphate 5-dehydrogenase (385 aa).

3–14 (AVHFGAGNIGRG) serves as a coordination point for NAD(+).

This sequence belongs to the mannitol dehydrogenase family.

The enzyme catalyses D-mannitol 1-phosphate + NAD(+) = beta-D-fructose 6-phosphate + NADH + H(+). The sequence is that of Mannitol-1-phosphate 5-dehydrogenase from Geobacillus thermodenitrificans (strain NG80-2).